The chain runs to 612 residues: MADNKGTENDWFLVEATDCEETLEETSLGDLDNVSCVSDLSDLLDEAPQSQGNSLELFHKQESLESEQELNALKRKLLYSPQARSADETDIASISPRLETISITKQDKKRYRRQLFSQDDSGLELSLLQDETENIDESTQVDQQQKEHTGEVGAAGVNILKASNIRAALLSRFKDTAGVSFTDLTRSYKSNKTCCGDWVLAVWGVRENLIDSVKELLQTHCVYIQLEHAVTEKNRFLFLLVRFKAQKSRETVIKLITTILPVDASYILSEPPKSRSVAAALFWYKRSMSSTVFTWGTTLEWIAQQTLINHQLDSESPFELCKMVQWAYDNGHTEECKIAYYYAVLADEDENARAFLSSNSQAKYVKDCAQMVRHYLRAEMAQMSMSEWIFRKLDNVEGSGNWKEIVRFLRFQEVEFISFMIAFKDLLCGKPKKNCLLIFGPPNTGKSMFCTSLLKLLGGKVISYCNSKSQFWLQPLADAKIGLLDDATKPCWDYMDIYMRNALDGNTICIDLKHRAPQQIKCPPLLITSNIDVKSDTCWMYLHSRISAFKFAHEFPFKDNGDPGFSLTDENWKSFFERFWQQLELSDQEDEGNDGKPQQSLRLTARAANEPI.

The Nuclear localization signal signature appears at 74–76 (KRK). Residues serine 80 and serine 95 each carry the phosphoserine; by host modification. A Nuclear export signal motif is present at residues 94–103 (ISPRLETISI). The DNA-binding region stretch occupies residues 148–315 (HTGEVGAAGV…TLINHQLDSE (168 aa)). Residues 414-564 (VEFISFMIAF…FPFKDNGDPG (151 aa)) enclose the SF3 helicase domain. 440–447 (GPPNTGKS) is an ATP binding site. A Glycyl lysine isopeptide (Lys-Gly) (interchain with G-Cter in SUMO) cross-link involves residue lysine 521. The tract at residues 587–612 (DQEDEGNDGKPQQSLRLTARAANEPI) is disordered.

It belongs to the papillomaviridae E1 protein family. In terms of assembly, can form hexamers. Interacts with E2 protein; this interaction increases E1 DNA binding specificity. Interacts with host DNA polymerase subunit POLA2. Interacts with host single stranded DNA-binding protein RPA1. Interacts with host TOP1; this interaction stimulates the enzymatic activity of TOP1. Phosphorylated. In terms of processing, sumoylated.

Its subcellular location is the host nucleus. The enzyme catalyses Couples ATP hydrolysis with the unwinding of duplex DNA by translocating in the 3'-5' direction.. It catalyses the reaction ATP + H2O = ADP + phosphate + H(+). In terms of biological role, ATP-dependent DNA 3'-5' helicase required for initiation of viral DNA replication. It forms a complex with the viral E2 protein. The E1-E2 complex binds to the replication origin which contains binding sites for both proteins. During the initial step, a dimer of E1 interacts with a dimer of protein E2 leading to a complex that binds the viral origin of replication with high specificity. Then, a second dimer of E1 displaces the E2 dimer in an ATP-dependent manner to form the E1 tetramer. Following this, two E1 monomers are added to each half of the site, which results in the formation of two E1 trimers on the viral ori. Subsequently, two hexamers will be created. The double hexamer acts as a bi-directional helicase machinery and unwinds the viral DNA and then recruits the host DNA polymerase to start replication. This Homo sapiens (Human) protein is Replication protein E1.